A 1313-amino-acid polypeptide reads, in one-letter code: Histone-lysine N-methyltransferase, H3 lysine-4 specific (1313 aa).

Disordered regions lie at residues 1–205, 400–458, 555–607, 667–792, 842–908, and 932–982; these read MSRS…DPSR, KKSR…KPRH, GKSS…AKNL, IVFD…AGED, ELPS…SKKQ, and AGIE…DPEL. The span at 7–18 shows a compositional bias: low complexity; that stretch reads ASFAQFFPAAPR. Basic and acidic residues predominate over residues 19 to 31; sequence AARDRATERERAR. The span at 70-80 shows a compositional bias: polar residues; the sequence is HITSLNHSSSA. Residues 105 to 121 are compositionally biased toward low complexity; sequence SASSHTSTSSSIFSSST. Polar residues-rich tracts occupy residues 130–158 and 174–186; these read SVRN…STSL and NGLT…SATD. The span at 194 to 204 shows a compositional bias: basic and acidic residues; sequence GTERVPPRDPS. Basic and acidic residues predominate over residues 559-607; that stretch reads RSSEDHRRHSYGSEKRPPPEHRQRDDQDRRRRDEEADIEEEKKQRAKNL. Positions 702–716 are enriched in basic residues; sequence RVRKLKSRGVNARKH. A compositionally biased stretch (basic and acidic residues) spans 758–784; it reads MIRDTEEPESRPRSRVSSEEDRNKEET. The segment covering 843-855 has biased composition (polar residues); it reads LPSQEQAVESVTP. A compositionally biased stretch (basic and acidic residues) spans 868 to 884; that stretch reads ADVKAEPAEDKETEDSR. Residues 895–907 show a composition bias toward basic residues; sequence PKKKAKAKKKSKK. Residues 960-978 show a composition bias toward basic and acidic residues; it reads LETKGEALEAPETESKPDL. The RxxxRR motif signature appears at 1137-1142; sequence RVNNRR. The region spanning 1171-1288 is the SET domain; it reads KPVKFARSAI…QNEELTYDYK (118 aa). Y1287 is a binding site for S-adenosyl-L-methionine. The region spanning 1297 to 1313 is the Post-SET domain; the sequence is DRIPCLCGTAACKGFLN.

This sequence belongs to the class V-like SAM-binding methyltransferase superfamily. Component of the Set1C/COMPASS complex.

The protein localises to the nucleus. Its subcellular location is the chromosome. It catalyses the reaction L-lysyl(4)-[histone H3] + 3 S-adenosyl-L-methionine = N(6),N(6),N(6)-trimethyl-L-lysyl(4)-[histone H3] + 3 S-adenosyl-L-homocysteine + 3 H(+). It carries out the reaction N(6)-methyl-L-lysyl(4)-[histone H3] + S-adenosyl-L-methionine = N(6),N(6)-dimethyl-L-lysyl(4)-[histone H3] + S-adenosyl-L-homocysteine + H(+). The catalysed reaction is N(6),N(6)-dimethyl-L-lysyl(4)-[histone H3] + S-adenosyl-L-methionine = N(6),N(6),N(6)-trimethyl-L-lysyl(4)-[histone H3] + S-adenosyl-L-homocysteine + H(+). Its function is as follows. Catalytic component of the COMPASS (Set1C) complex that specifically mono-, di- and trimethylates histone H3 to form H3K4me1/2/3. Binds RNAs which might negatively affect its histone methyltransferase activity. COMPASS recognizes ubiquitinated H2B on one face of the nucleosome which stimulates the methylation of H3 on the opposing face. The protein is Histone-lysine N-methyltransferase, H3 lysine-4 specific (set-1) of Neurospora crassa (strain ATCC 24698 / 74-OR23-1A / CBS 708.71 / DSM 1257 / FGSC 987).